The sequence spans 360 residues: BLOC-1-related complex subunit 6 (360 aa).

The interval 1-201 (MEAAQGRLGP…TGAGGGRRAT (201 aa)) is disordered. Residues 23–33 (ATFSGRPSRTP) are compositionally biased toward polar residues. Residue threonine 41 is modified to Phosphothreonine. Serine 130 is modified (phosphoserine). A compositionally biased stretch (acidic residues) spans 144–155 (EGDDDDDEDEEA). Residue serine 173 is modified to Phosphoserine. A compositionally biased stretch (gly residues) spans 179-198 (GACGGGGSSSSGETGAGGGR). Threonine 201 is modified (phosphothreonine). A Phosphoserine modification is found at serine 204.

This sequence belongs to the BORCS6 family. In terms of assembly, component of the BLOC-one-related complex (BORC) which is composed of BLOC1S1, BLOC1S2, BORCS5, BORCS6, BORCS7, BORCS8, KXD1 and SNAPIN.

It localises to the lysosome membrane. In terms of biological role, as part of the BORC complex may play a role in lysosomes movement and localization at the cell periphery. Associated with the cytosolic face of lysosomes, the BORC complex may recruit ARL8B and couple lysosomes to microtubule plus-end-directed kinesin motor. In Mus musculus (Mouse), this protein is BLOC-1-related complex subunit 6.